We begin with the raw amino-acid sequence, 143 residues long: Large ribosomal subunit protein uL16 (143 aa).

Residues 1–14 (MLTPKRVKWRRQHR) show a composition bias toward basic residues. The interval 1–23 (MLTPKRVKWRRQHRPDRAGKAKG) is disordered.

This sequence belongs to the universal ribosomal protein uL16 family. As to quaternary structure, part of the 50S ribosomal subunit.

Binds 23S rRNA and is also seen to make contacts with the A and possibly P site tRNAs. In Desulforudis audaxviator (strain MP104C), this protein is Large ribosomal subunit protein uL16.